Consider the following 56-residue polypeptide: Ferredoxin (56 aa).

2 consecutive 4Fe-4S ferredoxin-type domains span residues 2–29 (AYVINDSCISCGACEPECPVNAITAGDD) and 29–56 (DKYVIDAATCIDCGACAGVCPVDAPQPE). [4Fe-4S] cluster is bound by residues Cys-9, Cys-12, Cys-15, Cys-19, Cys-38, Cys-41, Cys-44, and Cys-48.

[4Fe-4S] cluster serves as cofactor.

Its function is as follows. Ferredoxins are iron-sulfur proteins that transfer electrons in a wide variety of metabolic reactions. The protein is Ferredoxin of Acetoanaerobium sticklandii (strain ATCC 12662 / DSM 519 / JCM 1433 / CCUG 9281 / NCIMB 10654 / HF) (Clostridium sticklandii).